Reading from the N-terminus, the 148-residue chain is Nucleoside diphosphate kinase (148 aa).

ATP-binding residues include Lys9, Phe57, Arg85, Thr91, Arg102, and Asn112. Thr91 is modified (phosphothreonine). The Pros-phosphohistidine intermediate role is filled by His115. Ser122 carries the post-translational modification Phosphoserine.

Belongs to the NDK family. In terms of assembly, homotetramer. It depends on Mg(2+) as a cofactor.

It is found in the cytoplasm. It carries out the reaction a 2'-deoxyribonucleoside 5'-diphosphate + ATP = a 2'-deoxyribonucleoside 5'-triphosphate + ADP. The catalysed reaction is a ribonucleoside 5'-diphosphate + ATP = a ribonucleoside 5'-triphosphate + ADP. Its function is as follows. Major role in the synthesis of nucleoside triphosphates other than ATP. The ATP gamma phosphate is transferred to the NDP beta phosphate via a ping-pong mechanism, using a phosphorylated active-site intermediate. The polypeptide is Nucleoside diphosphate kinase (Bacillus cereus (strain ATCC 10987 / NRS 248)).